Here is a 419-residue protein sequence, read N- to C-terminus: N-acylglucosamine 2-epimerase (419 aa).

The tract at residues L185–L206 is leucine-zipper. At S418 the chain carries Phosphoserine.

It belongs to the N-acylglucosamine 2-epimerase family. As to quaternary structure, homodimer. Forms a heterodimer with renin and inhibits its activity.

It catalyses the reaction an N-acyl-D-glucosamine = an N-acyl-D-mannosamine. It functions in the pathway amino-sugar metabolism; N-acetylneuraminate degradation. Functionally, catalyzes the interconversion of N-acetylglucosamine to N-acetylmannosamine. Involved in the N-glycolylneuraminic acid (Neu5Gc) degradation pathway. The sequence is that of N-acylglucosamine 2-epimerase (Renbp) from Mus musculus (Mouse).